Consider the following 286-residue polypeptide: Putative ribosome-inactivating protein (286 aa).

Residues 1-21 (MNRFSVLMCLVILSIFHGVPT) form the signal peptide. N-linked (GlcNAc...) asparagine glycosylation is found at N103 and N110. E185 is a catalytic residue. N252 is a glycosylation site (N-linked (GlcNAc...) asparagine).

Belongs to the ribosome-inactivating protein family. Type 1 RIP subfamily.

The catalysed reaction is Endohydrolysis of the N-glycosidic bond at one specific adenosine on the 28S rRNA.. The sequence is that of Putative ribosome-inactivating protein from Cucumis ficifolius (Cucumis figarei).